A 132-amino-acid polypeptide reads, in one-letter code: Small ribosomal subunit protein uS11 (132 aa).

The interval 110–132 is disordered; the sequence is IEDVTPVPSDSTRRKGGRRGRRL. Over residues 123 to 132 the composition is skewed to basic residues; sequence RKGGRRGRRL.

The protein belongs to the universal ribosomal protein uS11 family. In terms of assembly, component of the small ribosomal subunit. Mature ribosomes consist of a small (40S) and a large (60S) subunit. The 40S subunit contains about 32 different proteins and 1 molecule of RNA (18S). The 60S subunit contains 45 different proteins and 3 molecules of RNA (25S, 5.8S and 5S).

It localises to the cytoplasm. Functionally, component of the ribosome, a large ribonucleoprotein complex responsible for the synthesis of proteins in the cell. The small ribosomal subunit (SSU) binds messenger RNAs (mRNAs) and translates the encoded message by selecting cognate aminoacyl-transfer RNA (tRNA) molecules. The large subunit (LSU) contains the ribosomal catalytic site termed the peptidyl transferase center (PTC), which catalyzes the formation of peptide bonds, thereby polymerizing the amino acids delivered by tRNAs into a polypeptide chain. The nascent polypeptides leave the ribosome through a tunnel in the LSU and interact with protein factors that function in enzymatic processing, targeting, and the membrane insertion of nascent chains at the exit of the ribosomal tunnel. RPS14B is involved in nucleolar processing of pre-18S ribosomal RNA and ribosome assembly. This chain is Small ribosomal subunit protein uS11 (RPS14B), found in Candida albicans (strain SC5314 / ATCC MYA-2876) (Yeast).